Here is a 202-residue protein sequence, read N- to C-terminus: Small ribosomal subunit protein uS4c-1 (202 aa).

In terms of domain architecture, S4 RNA-binding spans 90-152; it reads MRLDNIVLRA…NKSRQLIDLN (63 aa).

It belongs to the universal ribosomal protein uS4 family. In terms of assembly, part of the 30S ribosomal subunit. Contacts protein S5. The interaction surface between S4 and S5 is involved in control of translational fidelity.

Its subcellular location is the plastid. It localises to the chloroplast. In terms of biological role, one of the primary rRNA binding proteins, it binds directly to 16S rRNA where it nucleates assembly of the body of the 30S subunit. Its function is as follows. With S5 and S12 plays an important role in translational accuracy. This is Small ribosomal subunit protein uS4c-1 from Cyanidium caldarium (Red alga).